We begin with the raw amino-acid sequence, 3535 residues long: Lysosomal-trafficking regulator (3535 aa).

Positions 412 to 436 (MESSASTAMPKQQQHPRHKRQRSSQ) are disordered. The stretch at 689–736 (TLSRRLIQLQLNSSDRASQLFQALLYKCSKHSRAKFWLDESSTPAKLE) is one WD 1 repeat. Residues 1066–1096 (STHQEPTGVVNSPSGDSQQPRPRARSFNSGS) show a composition bias toward polar residues. 2 disordered regions span residues 1066 to 1132 (STHQ…NAGV) and 1592 to 1613 (GEGQPTGRSPGSSSSSRSTLDG). The span at 1596 to 1610 (PTGRSPGSSSSSRST) shows a compositional bias: low complexity. One can recognise a BEACH-type PH domain in the interval 2686 to 2784 (SLNSQILYNF…MREVFCDKIV (99 aa)). In terms of domain architecture, BEACH spans 2784–3081 (VATPDQSKVI…QLFKSPHPAS (298 aa)). Residues 3254–3287 (GIGGGGSERVDEAGNLHPTSSASSVNSSSISSGG) are disordered. Residues 3273-3285 (SSASSVNSSSISS) show a composition bias toward low complexity. WD repeat units lie at residues 3307–3346 (RHTDEITCITLSVEFKIAVTAGRDGIAVIWDLNDWSYVRT), 3442–3486 (VHED…FVSE), and 3489–3527 (TGTSPIRSICYSTHQHLVVLTRESHIQVWESEGLYGNAP).

In terms of assembly, interacts with Rab5; the interaction is independent of GDP or GTP. Interacts with msps.

Its subcellular location is the vesicle. The protein localises to the cytoplasm. The protein resides in the cytoskeleton. It localises to the spindle. It is found in the spindle pole. Adapter protein that regulates intracellular membrane fusion reactions. Regulates the fusion of lysosome-related organelles. Promotes microtubules nucleation and centrosomal recruitment of microtubule nucleating proteins such as msps. In syncytial embryos, during the formation of yolk granules, suppresses vesicle fusion events with lipid droplets, possibly via interaction with Rab5. In the eye, regulates pigment granules size. In hemocytes, required for the late steps of bacteria phagocytosis. In fat body, required for autophagosome maturation. The chain is Lysosomal-trafficking regulator from Drosophila melanogaster (Fruit fly).